A 145-amino-acid chain; its full sequence is RNAP inhibitory protein (145 aa).

The C-terminal tail, binds in the RNAP DNA-binding channel stretch occupies residues His-110 to Ser-123.

This sequence belongs to the viral ORF131/RIP family. Interacts with host RNA polymerase (RNAP) subunits Rpo1N and Rpo2.

The protein resides in the virion. Its function is as follows. Plays a role in the inhibition of global transcription by interacting with the RNA polymerase (RNAP) clamp, locking it in a fixed position and inhibiting the formation and/or stability of the pre-initiation complex (PIC). Also overlaps with the transcription factor B binding site; overall RIP probably interferes with DNA loading onto RNAP but does not displace DNA once it is loaded. May play a role in virus particle assembly, possibly by dissociating active RNAP from the virus genome. The protein is RNAP inhibitory protein of Acidianus two-tailed virus (ATV).